Reading from the N-terminus, the 370-residue chain is Nematocyst expressed protein 4 (370 aa).

Positions 1 to 19 (MAWTLVLLVLLGTSSCLDA) are cleaved as a signal peptide. The disordered stretch occupies residues 34 to 55 (SGSGSGEEGSSGSGSAPEPVRD). A compositionally biased stretch (gly residues) spans 36 to 45 (SGSGEEGSSG). 3 ShKT domains span residues 70-102 (CLDKGENCTGDPEQCQENWQEMVVQCPFSCRFC), 113-149 (CTDARGAACKDWADNRNDCLRFPQFMSTECTKSCKLC), and 155-190 (GKKFDKDVRCIEWAKNGYCNEGELYKEKCPHNCEVH). Disulfide bonds link C70–C102, C77–C95, C84–C99, C113–C149, C121–C142, C131–C146, C164–C183, and C173–C187. Residues 306 to 340 (PYPPPPPPYPEQVPPPPPPPPPPPPPPPYPYPYPY) are compositionally biased toward pro residues. Residues 306-370 (PYPPPPPPYP…HHKENHSKKS (65 aa)) form a disordered region. The segment covering 349-370 (HKSKKHAKHHEKHHKENHSKKS) has biased composition (basic residues).

It belongs to the NEP3 family. In terms of tissue distribution, nematocytes. In late planulae, transcripts are found throughout the ectoderm in nematocytes, with high concentration of expressing cells in the oral pole. In primary polyps, is expressed in nematocytes in the body wall and physa ectoderm and in the upper and lower pharynx.

It localises to the nematocyst. The protein localises to the secreted. The protein is Nematocyst expressed protein 4 of Nematostella vectensis (Starlet sea anemone).